The chain runs to 374 residues: 2,7-anhydro-N-acetylneuraminate hydratase (374 aa).

NAD(+) contacts are provided by Y13, F14, D35, N38, T70, N72, H75, E92, K93, W162, and K163.

Belongs to the Gfo/Idh/MocA family. In terms of assembly, homodimer. NAD(+) is required as a cofactor.

The enzyme catalyses N-acetyl-2,7-anhydro-alpha-neuraminate + H2O = N-acetyl-alpha-neuraminate. With respect to regulation, neu5Ac is produced in the presence of NAD(+) or NADH, but not in the presence of FAD. Hydratase involved in the degradation of sialic acids, which are present in the host mucus layer and represent a much-coveted source of nutrients for R.gnavus, a prevalent member of the normal gut microbiota. Catalyzes the reversible conversion of the dehydrated form of N-acetylneuraminate (Neu5Ac), 2,7-anhydro-N-acetylneuraminate (2,7-AN), to Neu5Ac, allowing growth on 2,7-AN produced by the IT-sialidase NanH. Acts through a multistep mechanism involving a keto intermediate and cycling of NADH/NAD(+). This Mediterraneibacter gnavus (strain ATCC 29149 / DSM 114966 / JCM 6515 / VPI C7-9) (Ruminococcus gnavus) protein is 2,7-anhydro-N-acetylneuraminate hydratase.